The following is a 198-amino-acid chain: MQAFRVHTGIGVPLRRSNVDTDQIIPAVFLKRVTRNGFEDGLFATWRVDPSFVLNLSPFDRGSVLVVGPDFGIGSSREHAVWALMDYGFRVVISSRFGDIFHGNAGKAGLLAAQVAQDDVEFLWKLIEQKPGLEITVNLQDRNINAATVVLPFKIDDYTAWRLLEGLDDIALNLRKLDEIEAFESARPAWKPRTLPTT.

Belongs to the LeuD family. LeuD type 1 subfamily. In terms of assembly, heterodimer of LeuC and LeuD.

The catalysed reaction is (2R,3S)-3-isopropylmalate = (2S)-2-isopropylmalate. The protein operates within amino-acid biosynthesis; L-leucine biosynthesis; L-leucine from 3-methyl-2-oxobutanoate: step 2/4. Functionally, catalyzes the isomerization between 2-isopropylmalate and 3-isopropylmalate, via the formation of 2-isopropylmaleate. This Mycobacterium leprae (strain Br4923) protein is 3-isopropylmalate dehydratase small subunit.